Reading from the N-terminus, the 287-residue chain is MNNSEGLKSFQQSLADLPQWVSERLLQQINQLTNYEPVIGIMGKTGVGKSSLCNALFAGDISPVSDVAACTREPLRFRLQVGDRYITLMDLPGVGESGARDTEYAALYREQLPRLDLVLWLIKADDRALTVDEHFYHQVIGEVYRHKVLFVISQSDKAEPTSGGGQLSTAQKQNISRKICLLHELFQPVHPVCAVSVRLQWGLKVMAERMIKCLPREATSPVVSQLHPSFRTTVVREQARSDFGETVGAVLDSISAFPLIPAPVRAVIQAVRTTVVSVARAVWDFFF.

GTP contacts are provided by residues 43-50, 90-93, and 156-159; these read GKTGVGKS, DLPG, and DKAE. One can recognise a G domain in the interval 48–138; that stretch reads GKSSLCNALF…LTVDEHFYHQ (91 aa).

The protein to E.coli YfjP and YeeP.

This is an uncharacterized protein from Escherichia coli (strain K12).